We begin with the raw amino-acid sequence, 169 residues long: PTS system glucose-specific EIIA component (169 aa).

The PTS EIIA type-1 domain occupies 39–143 (DVVFAEKIVG…STLTPVVISN (105 aa)). Zn(2+) is bound by residues His76 and His91. The active-site Tele-phosphohistidine intermediate; for EIIA activity is His91. The residue at position 91 (His91) is a Phosphohistidine; by HPr.

In terms of assembly, heterodimer with glycerol kinase (glpk). The cofactor is Zn(2+).

Its subcellular location is the cytoplasm. Its function is as follows. The phosphoenolpyruvate-dependent sugar phosphotransferase system (sugar PTS), a major carbohydrate active transport system, catalyzes the phosphorylation of incoming sugar substrates concomitantly with their translocation across the cell membrane. The enzyme II complex composed of PtsG and Crr is involved in glucose transport. This Escherichia coli O6:H1 (strain CFT073 / ATCC 700928 / UPEC) protein is PTS system glucose-specific EIIA component (crr).